Consider the following 382-residue polypeptide: V-type proton ATPase subunit C 1 (382 aa).

Thr-2 is modified (N-acetylthreonine).

This sequence belongs to the V-ATPase C subunit family. As to quaternary structure, V-ATPase is a heteromultimeric enzyme made up of two complexes: the ATP-hydrolytic V1 complex and the proton translocation V0 complex. The V1 complex consists of three catalytic AB heterodimers that form a heterohexamer, three peripheral stalks each consisting of EG heterodimers, one central rotor including subunits D and F, and the regulatory subunits C and H. The proton translocation complex V0 consists of the proton transport subunit a, a ring of proteolipid subunits c9c'', rotary subunit d, subunits e and f, and two accessory subunits.

Functionally, subunit of the V1 complex of vacuolar(H+)-ATPase (V-ATPase), a multisubunit enzyme composed of a peripheral complex (V1) that hydrolyzes ATP and a membrane integral complex (V0) that translocates protons. V-ATPase is responsible for acidifying and maintaining the pH of intracellular compartments and in some cell types, is targeted to the plasma membrane, where it is responsible for acidifying the extracellular environment. Subunit C is necessary for the assembly of the catalytic sector of the enzyme and is likely to have a specific function in its catalytic activity. The sequence is that of V-type proton ATPase subunit C 1 (atp6v1c1) from Xenopus laevis (African clawed frog).